The primary structure comprises 189 residues: Peroxiredoxin sll1621 (189 aa).

The Thioredoxin domain maps to 2–177 (TPERVPSVVF…MLAYLKGAEA (176 aa)). Cys55 (cysteine sulfenic acid (-SOH) intermediate (for peroxiredoxin activity)) is an active-site residue.

It belongs to the peroxiredoxin family. Prx5 subfamily. As to quaternary structure, monomer.

The enzyme catalyses a hydroperoxide + 2 glutathione = an alcohol + glutathione disulfide + H2O. In terms of biological role, thiol-specific peroxidase that catalyzes the reduction of hydrogen peroxide and organic hydroperoxides to water and alcohols, respectively. Plays a role in cell protection against oxidative stress by detoxifying peroxides. The chain is Peroxiredoxin sll1621 from Synechocystis sp. (strain ATCC 27184 / PCC 6803 / Kazusa).